A 176-amino-acid chain; its full sequence is RNA pyrophosphohydrolase (176 aa).

One can recognise a Nudix hydrolase domain in the interval 8-159; sequence PYRTCVGMML…KRPVYERVVK (152 aa). A Nudix box motif is present at residues 47–68; the sequence is GGVDPGEDTWAAAKRELYEETS.

This sequence belongs to the Nudix hydrolase family. RppH subfamily. Requires a divalent metal cation as cofactor.

Functionally, accelerates the degradation of transcripts by removing pyrophosphate from the 5'-end of triphosphorylated RNA, leading to a more labile monophosphorylated state that can stimulate subsequent ribonuclease cleavage. The protein is RNA pyrophosphohydrolase of Rhodopseudomonas palustris (strain BisA53).